The chain runs to 89 residues: Large ribosomal subunit protein bL27 (89 aa).

The segment at 1–21 is disordered; that stretch reads MAHKKAGGSSRNGRDSQSKRL.

It belongs to the bacterial ribosomal protein bL27 family.

In Rhizobium rhizogenes (strain K84 / ATCC BAA-868) (Agrobacterium radiobacter), this protein is Large ribosomal subunit protein bL27.